The chain runs to 100 residues: Small ribosomal subunit protein uS14 (100 aa).

This sequence belongs to the universal ribosomal protein uS14 family. In terms of assembly, part of the 30S ribosomal subunit. Contacts proteins S3 and S10.

Binds 16S rRNA, required for the assembly of 30S particles and may also be responsible for determining the conformation of the 16S rRNA at the A site. In Synechocystis sp. (strain ATCC 27184 / PCC 6803 / Kazusa), this protein is Small ribosomal subunit protein uS14.